A 266-amino-acid polypeptide reads, in one-letter code: Regulatory protein RecX (266 aa).

This sequence belongs to the RecX family.

It is found in the cytoplasm. Functionally, modulates RecA activity. The sequence is that of Regulatory protein RecX from Levilactobacillus brevis (strain ATCC 367 / BCRC 12310 / CIP 105137 / JCM 1170 / LMG 11437 / NCIMB 947 / NCTC 947) (Lactobacillus brevis).